The chain runs to 88 residues: Small ribosomal subunit protein bS20 (88 aa).

The protein belongs to the bacterial ribosomal protein bS20 family.

In terms of biological role, binds directly to 16S ribosomal RNA. The sequence is that of Small ribosomal subunit protein bS20 from Methylocella silvestris (strain DSM 15510 / CIP 108128 / LMG 27833 / NCIMB 13906 / BL2).